The chain runs to 478 residues: MDLLKKEYTGITYISGPLLFVENAKDLAYGAIVDIKDGTGRVRGGQVIEVSEEYAVIQVFEETTGLDLATTSVSLVEDVARLGVSKEMLGRRFNGIGKPIDGLPPITPEKRLPITGLPLNPVARRKPEQFIQTGISTIDVMNTLVRGQKLPIFSGSGLPANEIAAQIARQATVRPDLSGEGEKEEPFAVVFAAMGITQRELSYFIQEFERTGALSRSVLFLNKADDPTIERILTPRMALTVAEYLAFEHDYHVLVILTDMTNYCEALREIGAAREEIPGRRGYPGYMYTDLATIYERAGVVEGKKGSVTQIPILSMPDDDRTHPIPDLTGYITEGQIQLSRELHRKGIYPPIDPLPSLSRLMNNGVGKGKTREDHKQVSDQLYSAYANGVDIRKLVAIIGEDALTENDRRYLQFADAFERFFINQGQQNRSIEESLQIAWALLSMLPQGELKRISKDHIGKYYGQKLEEIWGAPQALD.

This sequence belongs to the ATPase alpha/beta chains family.

Its function is as follows. Produces ATP from ADP in the presence of a proton gradient across the membrane. The V-type beta chain is a regulatory subunit. The protein is V-type ATP synthase beta chain of Thermus thermophilus (strain ATCC BAA-163 / DSM 7039 / HB27).